We begin with the raw amino-acid sequence, 122 residues long: Large ribosomal subunit protein uL14 (122 aa).

The protein belongs to the universal ribosomal protein uL14 family. As to quaternary structure, part of the 50S ribosomal subunit. Forms a cluster with proteins L3 and L19. In the 70S ribosome, L14 and L19 interact and together make contacts with the 16S rRNA in bridges B5 and B8.

Functionally, binds to 23S rRNA. Forms part of two intersubunit bridges in the 70S ribosome. The protein is Large ribosomal subunit protein uL14 of Beijerinckia indica subsp. indica (strain ATCC 9039 / DSM 1715 / NCIMB 8712).